Here is a 1190-residue protein sequence, read N- to C-terminus: ATPase histone chaperone abo1 (1190 aa).

The segment covering 1-11 (MKEEASEHGGS) has biased composition (basic and acidic residues). Disordered stretches follow at residues 1–185 (MKEE…RKTH) and 204–253 (YIDS…DLAD). Composition is skewed to acidic residues over residues 52–62 (QEDEGDEDWEE) and 82–106 (SEGD…DSED). Basic residues predominate over residues 112-131 (VRSKPKYKPGTRRSTRLRNR). A compositionally biased stretch (basic and acidic residues) spans 141–152 (EEHRPILRERTS). 309-314 (PGTGKT) contacts ATP. The Bromo domain maps to 794-922 (RLLNKLKIKL…ANVLLGVEDM (129 aa)).

Belongs to the AAA ATPase family. Homohexamer. Interacts with the FACT complex subunits spt16 and pob3. Interacts with histone H3-H4 (via N-terminus).

It localises to the nucleus. The protein resides in the chromosome. It catalyses the reaction ATP + H2O = ADP + phosphate + H(+). Functionally, ATPase histone chaperone which facilitates loading of histone H3-H4 onto DNA in an ATP-dependent manner. Plays a genome-wide role in nucleosome organization and establishment of chromatin. Also plays a role in heterochromatin assembly by stabilizing recruitment of the histone methyltransferase clr4 to methylated histone H3, to promote the transition from H3K9me2 to H3K9me3. The sequence is that of ATPase histone chaperone abo1 from Schizosaccharomyces pombe (strain 972 / ATCC 24843) (Fission yeast).